The sequence spans 356 residues: Isopentenyl-diphosphate delta-isomerase (356 aa).

8–9 lines the substrate pocket; it reads RK. FMN is bound by residues 66–68, Ser-96, and Asn-124; that span reads AIT. 96-98 provides a ligand contact to substrate; that stretch reads SQR. Gln-160 contributes to the substrate binding site. Residue Glu-161 coordinates Mg(2+). FMN is bound by residues Lys-201, Thr-231, 280 to 282, and 301 to 302; these read GIR and AL.

This sequence belongs to the IPP isomerase type 2 family. In terms of assembly, homooctamer. Dimer of tetramers. Requires FMN as cofactor. NADPH is required as a cofactor. Mg(2+) serves as cofactor.

The protein localises to the cytoplasm. It carries out the reaction isopentenyl diphosphate = dimethylallyl diphosphate. In terms of biological role, involved in the biosynthesis of isoprenoids. Catalyzes the 1,3-allylic rearrangement of the homoallylic substrate isopentenyl (IPP) to its allylic isomer, dimethylallyl diphosphate (DMAPP). This is Isopentenyl-diphosphate delta-isomerase from Methanococcus aeolicus (strain ATCC BAA-1280 / DSM 17508 / OCM 812 / Nankai-3).